Here is a 239-residue protein sequence, read N- to C-terminus: tRNA (guanine-N(1)-)-methyltransferase (239 aa).

S-adenosyl-L-methionine-binding positions include Gly109 and 133–138 (IGDYVL). Disordered stretches follow at residues 163–187 (PASR…YTRP) and 217–239 (QRTR…DPGR). Composition is skewed to basic and acidic residues over residues 165 to 180 (SRHD…RRLE) and 217 to 226 (QRTRERRPEL).

The protein belongs to the RNA methyltransferase TrmD family. As to quaternary structure, homodimer.

It is found in the cytoplasm. The enzyme catalyses guanosine(37) in tRNA + S-adenosyl-L-methionine = N(1)-methylguanosine(37) in tRNA + S-adenosyl-L-homocysteine + H(+). In terms of biological role, specifically methylates guanosine-37 in various tRNAs. This is tRNA (guanine-N(1)-)-methyltransferase from Mycolicibacterium paratuberculosis (strain ATCC BAA-968 / K-10) (Mycobacterium paratuberculosis).